The sequence spans 297 residues: UDP-N-acetylenolpyruvoylglucosamine reductase (297 aa).

The FAD-binding PCMH-type domain occupies 26 to 191 (KSGGTADWLF…VAARFRGHPG (166 aa)). Residue Arg171 is part of the active site. Ser220 serves as the catalytic Proton donor. Glu290 is a catalytic residue.

This sequence belongs to the MurB family. Requires FAD as cofactor.

It is found in the cytoplasm. The catalysed reaction is UDP-N-acetyl-alpha-D-muramate + NADP(+) = UDP-N-acetyl-3-O-(1-carboxyvinyl)-alpha-D-glucosamine + NADPH + H(+). Its pathway is cell wall biogenesis; peptidoglycan biosynthesis. Cell wall formation. This chain is UDP-N-acetylenolpyruvoylglucosamine reductase, found in Novosphingobium aromaticivorans (strain ATCC 700278 / DSM 12444 / CCUG 56034 / CIP 105152 / NBRC 16084 / F199).